The chain runs to 235 residues: Small ribosomal subunit protein uS3 (235 aa).

One can recognise a KH type-2 domain in the interval isoleucine 39–arginine 107. Residues glutamine 215 to alanine 235 form a disordered region.

This sequence belongs to the universal ribosomal protein uS3 family. Part of the 30S ribosomal subunit. Forms a tight complex with proteins S10 and S14.

Its function is as follows. Binds the lower part of the 30S subunit head. Binds mRNA in the 70S ribosome, positioning it for translation. The sequence is that of Small ribosomal subunit protein uS3 from Rhodopseudomonas palustris (strain ATCC BAA-98 / CGA009).